Consider the following 350-residue polypeptide: tRNA uridine(34) hydroxylase (350 aa).

One can recognise a Rhodanese domain in the interval 146-240 (DDPDTLFVDM…YARKAKEQGL (95 aa)). Cys-200 functions as the Cysteine persulfide intermediate in the catalytic mechanism.

It belongs to the TrhO family.

It catalyses the reaction uridine(34) in tRNA + AH2 + O2 = 5-hydroxyuridine(34) in tRNA + A + H2O. Its function is as follows. Catalyzes oxygen-dependent 5-hydroxyuridine (ho5U) modification at position 34 in tRNAs. The sequence is that of tRNA uridine(34) hydroxylase from Yersinia enterocolitica serotype O:8 / biotype 1B (strain NCTC 13174 / 8081).